A 178-amino-acid chain; its full sequence is Fatty-acid and retinol-binding protein 1 (178 aa).

Residues 1 to 16 form the signal peptide; it reads MYHQLILMALIGVIMA. N-linked (GlcNAc...) asparagine glycosylation is found at Asn-44 and Asn-75. Coiled coils occupy residues 67-89 and 123-154; these read DAAL…ELRN and KLDM…LKAT. The N-linked (GlcNAc...) asparagine glycan is linked to Asn-157.

It belongs to the fatty-acid and retinol-binding protein (FARBP) family. Post-translationally, N-glycosylated.

It localises to the secreted. Functionally, binds retinol and different fatty acids. The protein is Fatty-acid and retinol-binding protein 1 of Onchocerca gutturosa.